The chain runs to 281 residues: Ras-related protein Rab-40C (281 aa).

Residues Ser-23, Gly-26, Lys-27, and Ser-46 each coordinate GTP. A switch-I region spans residues 41 to 49; the sequence is SPYAYSNGI. Ser-46 and Asp-69 together coordinate Mg(2+). The GTP site is built by Gly-72, Asn-126, and Arg-127. Positions 72–88 are switch-II; sequence GQGRFCTIFRSYSRGAQ. The SOCS box domain occupies 175 to 228; the sequence is LMRHGMEKIWRPNRVFSLQDLCCRAIVSCTPVHLIDKLPLPVTIKSHLKSFSMA. Residues 245–281 form a disordered region; it reads SGAGGGGSKGNSLKRSKSIRPPQSPPQNCSRSNCKIS. Residues 270–281 show a composition bias toward polar residues; sequence PQNCSRSNCKIS. Cys-273 carries S-palmitoyl cysteine lipidation. Cys-278 carries S-geranylgeranyl cysteine lipidation.

It belongs to the small GTPase superfamily. Rab family. As to quaternary structure, component of the cullin-5-RING E3 ubiquitin-protein ligase complex (ECS(RAB40C) complex) composed of CUL5, Elongin BC (ELOB and ELOC), RNF7/RBX2 and RAB40C. Interacts with protein phosphatase 6 (PP6) complex components ANKRD28, ANKRD52, PPP6C, PP6R1 and PP6R2; the interaction leads to ANKRD28 ubiquitination and decreased PP6 activity. Interacts with DAB2IP; DAB2IP acts as a GAP for RAB40C. Requires Mg(2+) as cofactor.

The protein resides in the cell membrane. It localises to the cytoplasm. It is found in the cytosol. The protein localises to the golgi apparatus membrane. It carries out the reaction GTP + H2O = GDP + phosphate + H(+). The protein operates within protein modification; protein ubiquitination. Regulated by guanine nucleotide exchange factors (GEFs) which promote the exchange of bound GDP for free GTP. Regulated by GTPase activating proteins (GAPs) including DAB2IP, which increase the GTP hydrolysis activity. Inhibited by GDP dissociation inhibitors (GDIs). In terms of biological role, RAB40C small GTPase acts as substrate-recognition component of the ECS(RAB40C) E3 ubiquitin ligase complex which mediates the ubiquitination and subsequent proteasomal degradation of target proteins. The Rab40 subfamily belongs to the Rab family that are key regulators of intracellular membrane trafficking, from the formation of transport vesicles to their fusion with membranes. Rabs cycle between an inactive GDP-bound form and an active GTP-bound form that is able to recruit to membranes different sets of downstream effectors directly responsible for vesicle formation, movement, tethering and fusion. As part of the ECS(RAB40C) complex, mediates ANKRD28 ubiquitination and degradation, thereby inhibiting protein phosphatase 6 (PP6) complex activity and focal adhesion assembly during cell migration. Also negatively regulate lipid droplets accumulation in a GTP-dependent manner. In Homo sapiens (Human), this protein is Ras-related protein Rab-40C.